A 262-amino-acid polypeptide reads, in one-letter code: uncharacterized protein (262 aa).

The S4 RNA-binding domain occupies 6–70; it reads LRINQFLAHY…LKNKKFSVLV (65 aa). Residue aspartate 108 is the Nucleophile of the active site.

Belongs to the pseudouridine synthase RsuA family.

It catalyses the reaction a uridine in RNA = a pseudouridine in RNA. This is an uncharacterized protein from Helicobacter pylori (strain J99 / ATCC 700824) (Campylobacter pylori J99).